The primary structure comprises 651 residues: Translation factor GUF1 homolog, mitochondrial (651 aa).

The N-terminal 26 residues, Met-1–Phe-26, are a transit peptide targeting the mitochondrion. Positions Lys-51–Lys-228 constitute a tr-type G domain. Residues Ala-60–Ser-67, Asp-121–His-125, and Asn-175–Asp-178 contribute to the GTP site.

The protein belongs to the TRAFAC class translation factor GTPase superfamily. Classic translation factor GTPase family. LepA subfamily.

Its subcellular location is the mitochondrion inner membrane. It catalyses the reaction GTP + H2O = GDP + phosphate + H(+). Its function is as follows. Promotes mitochondrial protein synthesis. May act as a fidelity factor of the translation reaction, by catalyzing a one-codon backward translocation of tRNAs on improperly translocated ribosomes. Binds to mitochondrial ribosomes in a GTP-dependent manner. The protein is Translation factor GUF1 homolog, mitochondrial of Brugia malayi (Filarial nematode worm).